We begin with the raw amino-acid sequence, 226 residues long: Large ribosomal subunit protein uL4 (226 aa).

The disordered stretch occupies residues Gly-47–Arg-74.

Belongs to the universal ribosomal protein uL4 family. As to quaternary structure, part of the 50S ribosomal subunit.

Its function is as follows. One of the primary rRNA binding proteins, this protein initially binds near the 5'-end of the 23S rRNA. It is important during the early stages of 50S assembly. It makes multiple contacts with different domains of the 23S rRNA in the assembled 50S subunit and ribosome. In terms of biological role, forms part of the polypeptide exit tunnel. In Kosmotoga olearia (strain ATCC BAA-1733 / DSM 21960 / TBF 19.5.1), this protein is Large ribosomal subunit protein uL4.